The following is a 221-amino-acid chain: Ribonuclease 3 (221 aa).

In terms of domain architecture, RNase III spans 1–123; that stretch reads MERTGHAFAD…LIAVLYLDGG (123 aa). E36 contributes to the Mg(2+) binding site. Residue D40 is part of the active site. Positions 109 and 112 each coordinate Mg(2+). The active site involves E112. The DRBM domain maps to 148 to 217; sequence DAKTELQEWA…AAALLLREGV (70 aa).

Belongs to the ribonuclease III family. Homodimer. The cofactor is Mg(2+).

Its subcellular location is the cytoplasm. The enzyme catalyses Endonucleolytic cleavage to 5'-phosphomonoester.. Functionally, digests double-stranded RNA. Involved in the processing of primary rRNA transcript to yield the immediate precursors to the large and small rRNAs (23S and 16S). Processes some mRNAs, and tRNAs when they are encoded in the rRNA operon. Processes pre-crRNA and tracrRNA of type II CRISPR loci if present in the organism. The chain is Ribonuclease 3 from Mesorhizobium japonicum (strain LMG 29417 / CECT 9101 / MAFF 303099) (Mesorhizobium loti (strain MAFF 303099)).